The following is a 1126-amino-acid chain: DNA-directed RNA polymerase subunit Rpo2 (1126 aa).

Zn(2+) contacts are provided by cysteine 1060, cysteine 1063, cysteine 1078, and histidine 1081.

The protein belongs to the RNA polymerase beta chain family. Part of the 13-subunit RNA polymerase complex. Interacts with TFS4. As to quaternary structure, (Microbial infection) Binds viral protein RIP which blocks global transcription. Zn(2+) is required as a cofactor.

Its subcellular location is the cytoplasm. It carries out the reaction RNA(n) + a ribonucleoside 5'-triphosphate = RNA(n+1) + diphosphate. Functionally, DNA-dependent RNA polymerase (RNAP) catalyzes the transcription of DNA into RNA using the four ribonucleoside triphosphates as substrates. This subunit is involved in DNA promoter recognition. The polypeptide is DNA-directed RNA polymerase subunit Rpo2 (Sulfolobus acidocaldarius (strain ATCC 33909 / DSM 639 / JCM 8929 / NBRC 15157 / NCIMB 11770)).